The following is a 369-amino-acid chain: Flagellar P-ring protein (369 aa).

Positions 1–22 (MTKFKHLLALAALLLAAGAAQA) are cleaved as a signal peptide.

Belongs to the FlgI family. In terms of assembly, the basal body constitutes a major portion of the flagellar organelle and consists of four rings (L,P,S, and M) mounted on a central rod.

The protein resides in the periplasm. It is found in the bacterial flagellum basal body. Functionally, assembles around the rod to form the L-ring and probably protects the motor/basal body from shearing forces during rotation. The sequence is that of Flagellar P-ring protein from Pseudomonas aeruginosa (strain LESB58).